The following is a 94-amino-acid chain: Viral macrophage inflammatory protein 2 (94 aa).

The first 20 residues, 1-20 (MDTKGILLVAVLTALLCLQS), serve as a signal peptide directing secretion. Cystine bridges form between Cys-34-Cys-58 and Cys-35-Cys-74.

It belongs to the intercrine beta (chemokine CC) family. As to quaternary structure, monomer. Interacts with human chemokine receptor CXCR4.

The protein resides in the secreted. Blocks infection by several different human immunodeficiency virus type 1 (HIV-1) strains. This occurs because vMIP-II binds to a wide range of chemokine receptors. May form part of the response to host defenses contributing to virus-induced neoplasia and may have relevance to KSHV and HIV-I interactions. The sequence is that of Viral macrophage inflammatory protein 2 (ORF K4) from Human herpesvirus 8 type P (isolate GK18) (HHV-8).